We begin with the raw amino-acid sequence, 121 residues long: UPF0344 protein BCA_1194 (121 aa).

Transmembrane regions (helical) follow at residues 6–26 (ITAWALGLILFFVAYSLYSAG), 38–58 (LMYIIIIVTGFMLYMGIMKTA), 65–85 (WYGLKMVAGILVIGGMEMVLV), and 92–112 (ATGAVWGLFIVALVAVFYLGL).

This sequence belongs to the UPF0344 family.

The protein resides in the cell membrane. The polypeptide is UPF0344 protein BCA_1194 (Bacillus cereus (strain 03BB102)).